Reading from the N-terminus, the 506-residue chain is Tabersonine 6,7-epoxidase isoform 1 (506 aa).

The helical transmembrane segment at 1–21 (MEFVVSLFAFVVSCFILLKVA) threads the bilayer. N-linked (GlcNAc...) asparagine glycans are attached at residues asparagine 173 and asparagine 261. A heme-binding site is contributed by cysteine 441.

The protein belongs to the cytochrome P450 family. Heme serves as cofactor. Mainly expressed in roots.

The protein resides in the endoplasmic reticulum membrane. It carries out the reaction (-)-tabersonine + reduced [NADPH--hemoprotein reductase] + O2 = lochnericine + oxidized [NADPH--hemoprotein reductase] + H2O + H(+). Its pathway is alkaloid biosynthesis. In terms of biological role, component of the monoterpenoid indole alkaloids (MIAs, e.g. echitovenine, tabersonine, lochnericine, 19-hydroxytabersonine and horhammericine) biosynthetic pathway; MIAs are used in cancer treatment and other medical applications. Cytochrome P450 catalyzing the conversion of tabersonine to lochnericine. The sequence is that of Tabersonine 6,7-epoxidase isoform 1 from Catharanthus roseus (Madagascar periwinkle).